We begin with the raw amino-acid sequence, 593 residues long: V-type sodium ATPase catalytic subunit A (593 aa).

232–239 contributes to the ATP binding site; that stretch reads GPFGAGKT.

It belongs to the ATPase alpha/beta chains family.

The enzyme catalyses 4 Na(+)(in) + ATP + H2O = 4 Na(+)(out) + ADP + phosphate + H(+). Involved in ATP-driven sodium extrusion. The sequence is that of V-type sodium ATPase catalytic subunit A (ntpA) from Enterococcus hirae (strain ATCC 9790 / DSM 20160 / JCM 8729 / LMG 6399 / NBRC 3181 / NCIMB 6459 / NCDO 1258 / NCTC 12367 / WDCM 00089 / R).